The following is a 300-amino-acid chain: GTPase Era (300 aa).

The Era-type G domain maps to 8 to 176 (RCGYVAIVGR…EAQIAKHLPE (169 aa)). The tract at residues 16–23 (GRPNVGKS) is G1. 16–23 (GRPNVGKS) contributes to the GTP binding site. Residues 42–46 (QTTRH) are G2. Positions 63 to 66 (DTPG) are G3. GTP is bound by residues 63 to 67 (DTPGM) and 125 to 128 (NKTD). A G4 region spans residues 125-128 (NKTD). A G5 region spans residues 155–157 (ISA). The KH type-2 domain maps to 199-283 (VREKIMRQLG…MLNLWVKVKG (85 aa)).

The protein belongs to the TRAFAC class TrmE-Era-EngA-EngB-Septin-like GTPase superfamily. Era GTPase family. As to quaternary structure, monomer.

The protein resides in the cytoplasm. It is found in the cell inner membrane. Its function is as follows. An essential GTPase that binds both GDP and GTP, with rapid nucleotide exchange. Plays a role in 16S rRNA processing and 30S ribosomal subunit biogenesis and possibly also in cell cycle regulation and energy metabolism. The protein is GTPase Era of Pseudomonas putida (strain ATCC 700007 / DSM 6899 / JCM 31910 / BCRC 17059 / LMG 24140 / F1).